Reading from the N-terminus, the 770-residue chain is Semaphorin-4F (770 aa).

The N-terminal stretch at 1-34 is a signal peptide; it reads MPASAARPRPGPGQPTASPFPLLLLAVLSGPVSG. The Extracellular portion of the chain corresponds to 35–659; the sequence is RVPRSVPRTS…RDAPSRAHTV (625 aa). Positions 42–510 constitute a Sema domain; sequence RTSLPISEAD…SRTEVTQVNT (469 aa). Asn-64 is a glycosylation site (N-linked (GlcNAc...) asparagine). The cysteines at positions 112 and 122 are disulfide-linked. A glycan (N-linked (GlcNAc...) asparagine) is linked at Asn-133. 3 disulfides stabilise this stretch: Cys-140–Cys-149, Cys-273–Cys-384, and Cys-297–Cys-343. N-linked (GlcNAc...) asparagine glycosylation occurs at Asn-509. In terms of domain architecture, PSI spans 512–563; the sequence is NCGRLQSCSECILAQDPVCAWSFRLDECVAHAGEHRGLVQDIESADVSSLCP. 3 cysteine pairs are disulfide-bonded: Cys-513-Cys-530, Cys-522-Cys-539, and Cys-587-Cys-628. Residues 580–635 enclose the Ig-like C2-type domain; that stretch reads AAHVVLPCSPSSAWASCVWHQPSGVTALTPRRDGLEVVVTPGAMGAYACECQEGGA. Residues 660 to 680 traverse the membrane as a helical segment; the sequence is GAGLAGFFLGILAASLTLILI. Residues 681 to 770 lie on the Cytoplasmic side of the membrane; the sequence is GRRQQRRRQR…PLATCDETSI (90 aa). The disordered stretch occupies residues 696 to 725; sequence DKVGLDLGAPPSGTTSYSQDPPSPSPEDER. A phosphoserine mark is found at Ser-718 and Ser-720. A PDZ-binding motif is present at residues 768–770; the sequence is TSI.

The protein belongs to the semaphorin family. In terms of assembly, interacts (via PDZ-binding motif) with DLG4/SAP90 (via PDZ domain 2); this interaction may promote translocation of DLG4/SAP90 to the membrane.

It localises to the cell membrane. It is found in the postsynaptic density. The protein localises to the perikaryon. The protein resides in the cell projection. Its subcellular location is the dendrite. Functionally, probable cell surface receptor that regulates oligodendroglial precursor cell migration. Might also regulate differentiation of oligodendroglial precursor cells. Has growth cone collapse activity against retinal ganglion-cell axons. The sequence is that of Semaphorin-4F (SEMA4F) from Homo sapiens (Human).